A 363-amino-acid chain; its full sequence is 3-dehydroquinate synthase (363 aa).

NAD(+)-binding positions include 134-135, Lys-147, and Lys-156; that span reads TT. Zn(2+)-binding residues include Glu-189, His-254, and His-271.

The protein belongs to the sugar phosphate cyclases superfamily. Dehydroquinate synthase family. The cofactor is Co(2+). Zn(2+) serves as cofactor. Requires NAD(+) as cofactor.

It localises to the cytoplasm. The catalysed reaction is 7-phospho-2-dehydro-3-deoxy-D-arabino-heptonate = 3-dehydroquinate + phosphate. Its pathway is metabolic intermediate biosynthesis; chorismate biosynthesis; chorismate from D-erythrose 4-phosphate and phosphoenolpyruvate: step 2/7. Catalyzes the conversion of 3-deoxy-D-arabino-heptulosonate 7-phosphate (DAHP) to dehydroquinate (DHQ). This is 3-dehydroquinate synthase from Prochlorococcus marinus (strain AS9601).